Consider the following 322-residue polypeptide: Breast cancer metastasis-suppressor 1-like protein (322 aa).

Residues 1–16 (MPVHSREKKESNHNDM) are compositionally biased toward basic and acidic residues. The interval 1 to 56 (MPVHSREKKESNHNDMEVDYPENEGSSSEEDDSDSSSGSEEGDSSEMDDEDCERRR) is disordered. A compositionally biased stretch (acidic residues) spans 17–51 (EVDYPENEGSSSEEDDSDSSSGSEEGDSSEMDDED). Coiled coils occupy residues 50-99 (EDCE…QAQE) and 147-178 (EKLL…ITSE).

This sequence belongs to the BRMS1 family.

The protein resides in the nucleus. Its function is as follows. Involved in the histone deacetylase (HDAC1)-dependent transcriptional repression activity. The polypeptide is Breast cancer metastasis-suppressor 1-like protein (brms1l) (Xenopus laevis (African clawed frog)).